We begin with the raw amino-acid sequence, 522 residues long: Lysophospholipid acyltransferase LPCAT4 (522 aa).

2 helical membrane-spanning segments follow: residues 43–63 (ILGFTLFPLRFLLAAIFLFLM) and 92–112 (HLIYLLSRTMFFMCGFHWITI). The short motif at 130–135 (HSTFFD) is the HXXXXD motif element. 2 N-linked (GlcNAc...) asparagine glycosylation sites follow: N166 and N517. Residues 496-522 (GRRKPPHIQQNGGCSGKNNPRNQSKMD) form a disordered region. Residues 503–522 (IQQNGGCSGKNNPRNQSKMD) are compositionally biased toward polar residues.

The protein belongs to the 1-acyl-sn-glycerol-3-phosphate acyltransferase family.

Its subcellular location is the endoplasmic reticulum membrane. The enzyme catalyses a 1-acyl-sn-glycero-3-phosphoethanolamine + an acyl-CoA = a 1,2-diacyl-sn-glycero-3-phosphoethanolamine + CoA. It carries out the reaction a 1-O-(1Z-alkenyl)-sn-glycero-3-phosphoethanolamine + an acyl-CoA = a 1-O-(1Z-alkenyl)-2-acyl-sn-glycero-3-phosphoethanolamine + CoA. It catalyses the reaction a 1-acyl-sn-glycero-3-phosphocholine + an acyl-CoA = a 1,2-diacyl-sn-glycero-3-phosphocholine + CoA. The catalysed reaction is a 1-O-alkyl-sn-glycero-3-phosphocholine + acetyl-CoA = a 1-O-alkyl-2-acetyl-sn-glycero-3-phosphocholine + CoA. The enzyme catalyses a 1-acyl-sn-glycero-3-phospho-L-serine + an acyl-CoA = a 1,2-diacyl-sn-glycero-3-phospho-L-serine + CoA. It functions in the pathway lipid metabolism; phospholipid metabolism. Displays acyl-CoA-dependent lysophospholipid acyltransferase activity with a subset of lysophospholipids as substrates. Prefers long chain acyl-CoAs (C16, C18) as acyl donors. This is Lysophospholipid acyltransferase LPCAT4 (lpcat4) from Xenopus tropicalis (Western clawed frog).